A 34-amino-acid chain; its full sequence is Mytilin-B (34 aa).

Intrachain disulfides connect Cys-2-Cys-27, Cys-6-Cys-29, Cys-10-Cys-31, and Cys-15-Cys-34.

The protein localises to the secreted. In terms of biological role, has antibacterial and antiviral activity. The chain is Mytilin-B from Mytilus edulis (Blue mussel).